The primary structure comprises 807 residues: MAERVEASSVPEGENTIEEREVGAMWELEQKLDQPMDEEANKLNNMYREKGLSMLMLLRLSFQSLGIVYGDLGTSPLYVFYNTFPDGIDDSEDVIGALSLIIYSLLLIPLIKYVFIVCKANDNGQGGTLAIYSLLCRHAKVKLIPNQHRSDEDLTTYSRTVSAEGSFAAKTKKWLEGKEWRKRALLVVVLLGTCMMIGDGILTPAISVLSATGGIKVNNPKMSGDIVVLVAIVILIGLFSMQHYGTDKVGWLFAPIVLIWFLFIGATGMYNICKYDTSVLKAFSPTYIYLYFKRRGRDGWISLGGILLSITGTEALYADIAYFPLLAIQLAFTFFVFPCLLLAYCGQAAYLVIHKEHYQDAFYASIPDSVYWPMFIVATGAAIVGSQATISGTYSIVKQAVAHGCFPRVKIVHTSKKFLGQIYCPDINWILMLGCIAVTASFKKQSQIGNAYGTAVVLVMLVTTLLMVLIMLLVWHCHWILVLIFTFLSFFVELSYFSAVIFKIDEGGWVPLIIAAISLLVMSVWHYATVKKYEFEMHSKVSMSWILGLGPSLGLVRVPGIGLVYTELASGVPHIFSHFITNLPAIHSVVVFVCVKYLPVYTVPEEERFLVKRIGPKTFRMFRCVARYGYKDLHKKDDDFENKLLTKLSSFIRIETMMEPTSNSSTYSSTYSVNHTQDSTVDLIHNNNNHNHNNNMDMFSSMVDYTVSTLDTIVSAESLHNTVSFSQDNTVEEEETDELEFLKTCKESGVVHIMGNTVVKARTGSWLPKKIAIDYVYAFLAKICRANSVILHVPHETLLNVGQVFYV.

Topologically, residues 1 to 59 (MAERVEASSVPEGENTIEEREVGAMWELEQKLDQPMDEEANKLNNMYREKGLSMLMLLR) are cytoplasmic. Residues 60 to 80 (LSFQSLGIVYGDLGTSPLYVF) form a helical membrane-spanning segment. The Extracellular segment spans residues 81–96 (YNTFPDGIDDSEDVIG). Residues 97–117 (ALSLIIYSLLLIPLIKYVFIV) traverse the membrane as a helical segment. Topologically, residues 118 to 185 (CKANDNGQGG…EGKEWRKRAL (68 aa)) are cytoplasmic. A helical transmembrane segment spans residues 186–206 (LVVVLLGTCMMIGDGILTPAI). Over 207 to 225 (SVLSATGGIKVNNPKMSGD) the chain is Extracellular. A helical membrane pass occupies residues 226 to 246 (IVVLVAIVILIGLFSMQHYGT). Residues 247–248 (DK) are Cytoplasmic-facing. Residues 249–269 (VGWLFAPIVLIWFLFIGATGM) form a helical membrane-spanning segment. Residues 270 to 299 (YNICKYDTSVLKAFSPTYIYLYFKRRGRDG) are Extracellular-facing. The helical transmembrane segment at 300-320 (WISLGGILLSITGTEALYADI) threads the bilayer. The Cytoplasmic segment spans residues 321-322 (AY). Residues 323–343 (FPLLAIQLAFTFFVFPCLLLA) form a helical membrane-spanning segment. Topologically, residues 344 to 369 (YCGQAAYLVIHKEHYQDAFYASIPDS) are extracellular. A helical membrane pass occupies residues 370-390 (VYWPMFIVATGAAIVGSQATI). The Cytoplasmic segment spans residues 391-417 (SGTYSIVKQAVAHGCFPRVKIVHTSKK). Residues 418-438 (FLGQIYCPDINWILMLGCIAV) form a helical membrane-spanning segment. The Extracellular portion of the chain corresponds to 439–454 (TASFKKQSQIGNAYGT). A helical membrane pass occupies residues 455–475 (AVVLVMLVTTLLMVLIMLLVW). Residues 476–481 (HCHWIL) lie on the Cytoplasmic side of the membrane. The helical transmembrane segment at 482–502 (VLIFTFLSFFVELSYFSAVIF) threads the bilayer. The Extracellular portion of the chain corresponds to 503–507 (KIDEG). Residues 508-528 (GWVPLIIAAISLLVMSVWHYA) form a helical membrane-spanning segment. Residues 529–807 (TVKKYEFEMH…LLNVGQVFYV (279 aa)) are Cytoplasmic-facing.

It belongs to the HAK/KUP transporter (TC 2.A.72.3) family.

Its subcellular location is the cell membrane. Putative potassium transporter. The sequence is that of Potassium transporter 9 (POT9) from Arabidopsis thaliana (Mouse-ear cress).